Here is a 1250-residue protein sequence, read N- to C-terminus: TBC1 domain family member 9B (1250 aa).

2 consecutive GRAM domains span residues 142 to 209 (LKMR…EKNA) and 288 to 356 (ECYR…EKAD). Phosphothreonine is present on Thr397. A disordered region spans residues 397 to 443 (TPSKQPGSIGSRKASVVDPSTESSPAPQEGSEQPASPASPLSSRQSF). Residues Ser411, Ser432, Ser435, and Ser463 each carry the phosphoserine modification. Residues 414–443 (DPSTESSPAPQEGSEQPASPASPLSSRQSF) show a composition bias toward polar residues. The 188-residue stretch at 508–695 (GIPESLRGEL…VIVDCFFYEG (188 aa)) folds into the Rab-GAP TBC domain. Residues 668–688 (LSWFLTLFLSVMPFESAVVIV) traverse the membrane as a helical segment. An EF-hand domain is found at 879 to 914 (HTPLLAGRMFRLLDENKDSLINFKEFVTGMSGMYHG). Disordered stretches follow at residues 974–999 (LPQE…PDYR), 1069–1093 (SART…ELHQ), and 1128–1157 (VEGG…MSSY). A compositionally biased stretch (basic and acidic residues) spans 984 to 999 (SEERGEEKGTSSPDYR). Phosphoserine is present on Ser1241.

It is found in the membrane. Its function is as follows. May act as a GTPase-activating protein for Rab family protein(s). This is TBC1 domain family member 9B (TBC1D9B) from Homo sapiens (Human).